The chain runs to 183 residues: Bifunctional protein PyrR (183 aa).

Residues 102-114 carry the PRPP-binding motif; it reads VVLVDDVLFSGRT.

The protein belongs to the purine/pyrimidine phosphoribosyltransferase family. PyrR subfamily.

It carries out the reaction UMP + diphosphate = 5-phospho-alpha-D-ribose 1-diphosphate + uracil. Functionally, regulates the transcription of the pyrimidine nucleotide (pyr) operon in response to exogenous pyrimidines. In terms of biological role, also displays a weak uracil phosphoribosyltransferase activity which is not physiologically significant. The protein is Bifunctional protein PyrR of Leifsonia xyli subsp. xyli (strain CTCB07).